The primary structure comprises 397 residues: Proteinase-activated receptor 2 (397 aa).

The first 25 residues, 1–25, serve as a signal peptide directing secretion; that stretch reads MRSLSLAWLLGGITLLAASASCNRT. The N-linked (GlcNAc...) asparagine glycan is linked to asparagine 23. A propeptide spans 26 to 36 (removed for receptor activation); it reads VNAPGPNSKGR. Topologically, residues 37-71 are extracellular; the sequence is SLIGRLDTPPPITGKGAPVEPGFSVDEFSASVLTG. The chain crosses the membrane as a helical span at residues 72–101; the sequence is KLTTVFLPVIYIIVFVIGLPSNGMALWVFF. Topologically, residues 102–108 are cytoplasmic; sequence FRTKKKH. A helical membrane pass occupies residues 109–137; sequence PAVIYMANLALADLLSVIWFPLKISYHLH. Residues 138-149 lie on the Extracellular side of the membrane; that stretch reads GNDWTYGDALCK. Cysteines 148 and 226 form a disulfide. Residues 150–177 form a helical membrane-spanning segment; the sequence is VLIGFFYGNMYCSILFMTCLSVQRYWVI. Over 178-183 the chain is Cytoplasmic; that stretch reads VNPMGH. Residues 184–211 traverse the membrane as a helical segment; sequence SRKRANIAVGVSLAIWLLIFLVTIPLYV. The Extracellular segment spans residues 212-235; the sequence is MRQTIYIPALNITTCHDVLPEEVL. A glycan (N-linked (GlcNAc...) asparagine) is linked at asparagine 222. A helical transmembrane segment spans residues 236–269; the sequence is VGDMFSYFLSLAIGVFLFPALLTASAYVLMIKTL. The Cytoplasmic segment spans residues 270–277; the sequence is RSSAMDEH. Residues 278-317 form a helical membrane-spanning segment; it reads SEKKRRRAIRLIITVLSMYFICFAPSNVLLVVHYFLIKSQ. The Extracellular segment spans residues 318–323; sequence RQSHVY. The chain crosses the membrane as a helical span at residues 324-347; that stretch reads ALYLVALCLSTLNSCIDPFVYYFV. At 348–397 the chain is on the cytoplasmic side; sequence SKDFRDQARNALLCRSVRTVKRMQISLTSNKFSRKSSSYSSSSTSVKTSY. The S-palmitoyl cysteine moiety is linked to residue cysteine 361.

This sequence belongs to the G-protein coupled receptor 1 family. Interacts with TLR4, COPS5 and TMED2. Interacts with GNAQ, GNA11, GNA12, GNA13 and GNA14. Post-translationally, a proteolytic cleavage generates a new N-terminus that functions as a tethered ligand. Activating serine proteases include trypsin, mast cell tryptase, coagulation factors VII and Xa, myeloblastin/PRTN3 and membrane-type serine protease 1/ST14. Proposed subsequent cleavage by serine proteases is leading to receptor deactivation and include neutrophil elastase and cathepsin G. At least in part, implicated proteases are also shown to activate the receptor; the glycosylation status of the receptor is thought to contribute to the difference. N-glycosylated and sialylated. In terms of processing, multiple phosphorylated on serine and threonine residues in the cytoplasmic region upon receptor activation; required for receptor desensitization and recruitment of beta-arrestin. Post-translationally, monoubiquitinated by Cbl at the plasma membrane and in early endosomes; not required for receptor endocytosis but for translocation to late endosomes or lysosomes. Deubiquitination involves Stambp and Usp8; required for lysosomal trafficking and receptor degradation.

Its subcellular location is the cell membrane. Its function is as follows. Receptor for trypsin and trypsin-like enzymes coupled to G proteins. Its function is mediated through the activation of several signaling pathways including phospholipase C (PLC), intracellular calcium, mitogen-activated protein kinase (MAPK), I-kappaB kinase/NF-kappaB and Rho. Can also be transactivated by cleaved F2R/PAR1. Involved in modulation of inflammatory responses and regulation of innate and adaptive immunity, and acts as a sensor for proteolytic enzymes generated during infection. Generally is promoting inflammation. Can signal synergistically with TLR4 and probably TLR2 in inflammatory responses and modulates Tlr3 signaling. Has a protective role in establishing the endothelial barrier; the activity involves coagulation factor X. Regulates endothelial cell barrier integrity during neutrophil extravasation, probably following proteolytic cleavage by PRTN3. Proposed to have a bronchoprotective role in airway epithelium, but also shown to compromise the airway epithelial barrier by interrupting E-cadherin adhesion. Involved in the regulation of vascular tone; activation results in hypotension presumably mediated by vasodilation. Associates with a subset of G proteins alpha subunits such as GNAQ, GNA11, GNA14, GNA12 and GNA13, but probably not with G(o)-alpha, G(i) subunit alpha-1 and G(i) subunit alpha-2. Believed to be a class B receptor which internalizes as a complex with arrestin and traffic with it to endosomal vesicles, presumably as desensitized receptor, for extended periods of time. Mediates inhibition of TNF-alpha stimulated JNK phosphorylation via coupling to G GNAQ and GNA11; the function involves dissociation of RIPK1 and Tradd from TNFR1. Mediates phosphorylation of nuclear factor NF-kappa-B RELA subunit at 'Ser-536'; the function involves Ikbkb and is predominantly independent of G proteins. Involved in cellular migration. Involved in cytoskeletal rearrangement and chemotaxis through beta-arrestin-promoted scaffolds; the function is independent of GNAQ and GNA11 and involves promotion of cofilin dephosphorylation and actin filament severing. Induces redistribution of COPS5 from the plasma membrane to the cytosol and activation of the JNK cascade is mediated by Cops5. Involved in the recruitment of leukocytes to the sites of inflammation and is the major PAR receptor capable of modulating eosinophil function such as pro-inflammatory cytokine secretion, superoxide production and degranulation. During inflammation promotes dendritic cell maturation, trafficking to the lymph nodes and subsequent T-cell activation. Involved in antimicrobial response of innate immune cells; activation enhances phagocytosis of Gram-positive and killing of Gram-negative bacteria. Acts synergistically with interferon-gamma in enhancing antiviral responses. Probably mediates activation of pro-inflammatory and pro-fibrotic responses in fibroblasts, triggered by coagulation factor Xa (F10). Probably mediates activation of barrier protective signaling responses in endothelial cells, triggered by coagulation factor Xa (F10). The polypeptide is Proteinase-activated receptor 2 (F2rl1) (Rattus norvegicus (Rat)).